A 214-amino-acid chain; its full sequence is MFLRSLNLCTILLFLAISSQVSQSLHFELQSGRTKCISEDIKSNSMTVGKYTVVNPNEAHPSPQSHKISIRVTSSYGNTYHHAEDVESGQFAFTAVESGDYMACYTAVDHKPEVTLSIDFDWRTGVQSKSWSSVAKKSQVEVMEFDVKRLIETVNSIHEEMFYLREREEEMQNLNRATNSKMAWLSFLSLFVCLGVAGMQFVHLKTFFEKKKVI.

The N-terminal stretch at 1-24 (MFLRSLNLCTILLFLAISSQVSQS) is a signal peptide. The Lumenal portion of the chain corresponds to 25–181 (LHFELQSGRT…QNLNRATNSK (157 aa)). One can recognise a GOLD domain in the interval 34 to 149 (TKCISEDIKS…VEVMEFDVKR (116 aa)). A coiled-coil region spans residues 164 to 177 (LREREEEMQNLNRA). Arginine 167 carries the post-translational modification Omega-N-methylated arginine. The chain crosses the membrane as a helical span at residues 182–202 (MAWLSFLSLFVCLGVAGMQFV). The Cytoplasmic portion of the chain corresponds to 203-214 (HLKTFFEKKKVI). A COPII vesicle coat-binding motif is present at residues 207–208 (FF). The COPI vesicle coat-binding motif lies at 207–214 (FFEKKKVI).

It belongs to the EMP24/GP25L family. In terms of assembly, probably oligomerizes with other members of the EMP24/GP25L family. Associates with the COPI vesicle coat (coatomer). Associates with the COPII vesicle coat (coatomer).

Its subcellular location is the endoplasmic reticulum membrane. It is found in the golgi apparatus. It localises to the cis-Golgi network membrane. The protein localises to the golgi stack membrane. Involved in vesicular protein trafficking. Mainly functions in the early secretory pathway. Thought to act as cargo receptor at the lumenal side for incorporation of secretory cargo molecules into transport vesicles and to be involved in vesicle coat formation at the cytoplasmic side. The protein is Transmembrane emp24 domain-containing protein p24delta9 of Arabidopsis thaliana (Mouse-ear cress).